Reading from the N-terminus, the 117-residue chain is MSIESEMIHVEVVYALPQEQRVLTLVVNQQATVEEIIRQSGVLEIYPEIDLGKNKVGVFSRLVKLDATVRDKDRIEIYRPLLADPKEIRRKRAEQAKESGAADPVTGGKPSPLRKAD.

The tract at residues 90–117 (RKRAEQAKESGAADPVTGGKPSPLRKAD) is disordered.

The protein belongs to the UPF0125 (RnfH) family.

This chain is UPF0125 protein VV0820, found in Vibrio vulnificus (strain YJ016).